A 414-amino-acid chain; its full sequence is MATQRASGLLQRLAQGSLVKQILVGLVLGILLAWISKPAAEAVGLLGTLFVGALKAVAPVLVLMLVMASIANHQHGQKTNIRPILFLYLLGTFSAALAAVVFSFAFPSTLHLSSSAQDIVPPSGIVEVLRGLLMSMVSNPIDALLNANYIGILVWAVSLGFALRHGNETTKNLVNDMSNAVTFMVKLVIRFAPIGIFGLVSSTLATTGFSTLWGYAHLLVVLIGCMLLVALVVNPLLVFWKIRRNPYPLVFACLRESGVYAFFTRSSAANIPVNMALCEKLNLDRDTYSVSIPLGATINMAGAAITITVLTLAAVHTLGVPVDLPTALLLSVVASLCACGASGVAGGSLLLIPLACNMFGIPNDIAMQVVAVGFIIGVLQDSCETALNSSTDVLFTAAACQAEDERLANNALRS.

8 helical membrane passes run 16–36 (GSLV…AWIS), 46–66 (LGTL…LMLV), 84–104 (ILFL…VFSF), 143–163 (ALLN…GFAL), 180–200 (AVTF…FGLV), 219–239 (LVVL…LLVF), 300–320 (MAGA…TLGV), and 332–352 (VVAS…LLLI).

Belongs to the dicarboxylate/amino acid:cation symporter (DAACS) (TC 2.A.23) family.

The protein localises to the cell inner membrane. The catalysed reaction is L-serine(in) + Na(+)(in) = L-serine(out) + Na(+)(out). It carries out the reaction L-threonine(in) + Na(+)(in) = L-threonine(out) + Na(+)(out). In terms of biological role, involved in the import of serine and threonine into the cell, with the concomitant import of sodium (symport system). In Salmonella schwarzengrund (strain CVM19633), this protein is Serine/threonine transporter SstT.